Reading from the N-terminus, the 609-residue chain is MSETFNSSEFLKTVTSSPGVYRMYDVDNIVIYVGKAKDLKKRLSSYFRKNLTNVKTQALVARIANIDVTITHSETDALILENDYIKQYMPKYNVLLRDDKSYPYILLSNHKHPRLSYHRGPKRAKGQYFGPYPNGGAVRESLHLLQKIFPIRQCDDLYYKARSRPCLQYQIGRCSAPCVDNVSLKDYQEQVALASLFLKGKDQQVTKALVAKMEQAAVELNYEQAARYRDQITALRRVAEQQEVSHSSGDMDVIGAHFASGVACFHLLFIREGKIFGSRSYYPKVPVDTELSEVLRAFMFQFYLNSDSQRVTPKEILVSDAFEEQAELAGAINTAQQRKVEIKSQVRGERAQFLRLALTNATNAVNTRLAHRNTVEQRFLLLEEAIEVSHKIQRMECFDISHTMGESTVSSCVVFNREGPNKADYRRYNIEGITPGDDYAAMKQAISRRFDKVAKAGKTPDILFIDGGIGQLRIAQKVVDEKFVALDHAPTLIGVAKGEGRKPGLETLIYGENEESFTLPADSGALHLIQQIRDESHRFAITGHRNKRQKTRNTSTLESIEGVGPKRRKALLQHLGGLQEVKSASVTELVKVPGISLEMAQTIHDALRG.

One can recognise a GIY-YIG domain in the interval 16 to 94 (SSPGVYRMYD…IKQYMPKYNV (79 aa)). The UVR domain maps to 203–238 (QQVTKALVAKMEQAAVELNYEQAARYRDQITALRRV).

The protein belongs to the UvrC family. As to quaternary structure, interacts with UvrB in an incision complex.

Its subcellular location is the cytoplasm. Its function is as follows. The UvrABC repair system catalyzes the recognition and processing of DNA lesions. UvrC both incises the 5' and 3' sides of the lesion. The N-terminal half is responsible for the 3' incision and the C-terminal half is responsible for the 5' incision. The polypeptide is UvrABC system protein C (Shewanella piezotolerans (strain WP3 / JCM 13877)).